A 257-amino-acid chain; its full sequence is Imidazole glycerol phosphate synthase subunit HisF (257 aa).

Active-site residues include aspartate 11 and aspartate 130.

The protein belongs to the HisA/HisF family. Heterodimer of HisH and HisF.

It localises to the cytoplasm. The catalysed reaction is 5-[(5-phospho-1-deoxy-D-ribulos-1-ylimino)methylamino]-1-(5-phospho-beta-D-ribosyl)imidazole-4-carboxamide + L-glutamine = D-erythro-1-(imidazol-4-yl)glycerol 3-phosphate + 5-amino-1-(5-phospho-beta-D-ribosyl)imidazole-4-carboxamide + L-glutamate + H(+). Its pathway is amino-acid biosynthesis; L-histidine biosynthesis; L-histidine from 5-phospho-alpha-D-ribose 1-diphosphate: step 5/9. In terms of biological role, IGPS catalyzes the conversion of PRFAR and glutamine to IGP, AICAR and glutamate. The HisF subunit catalyzes the cyclization activity that produces IGP and AICAR from PRFAR using the ammonia provided by the HisH subunit. This Shewanella frigidimarina (strain NCIMB 400) protein is Imidazole glycerol phosphate synthase subunit HisF.